Reading from the N-terminus, the 124-residue chain is Type-4 ice-structuring protein (124 aa).

Residues 1–20 form the signal peptide; sequence MKFSLIAAVALLALAQGSFA. Q21 is modified (pyrrolidone carboxylic acid).

The protein belongs to the apolipoprotein A1/A4/E family.

The protein resides in the secreted. Functionally, antifreeze proteins lower the blood freezing point. In Paralichthys olivaceus (Bastard halibut), this protein is Type-4 ice-structuring protein.